The primary structure comprises 198 residues: Recombination protein RecR (198 aa).

The segment at 57–72 (CSVCGHITENDPCYIC) adopts a C4-type zinc-finger fold. The region spanning 80–175 (SVICVVEDDK…KVTRLAQGLS (96 aa)) is the Toprim domain.

It belongs to the RecR family.

May play a role in DNA repair. It seems to be involved in an RecBC-independent recombinational process of DNA repair. It may act with RecF and RecO. This Staphylococcus aureus (strain MRSA252) protein is Recombination protein RecR.